The following is a 237-amino-acid chain: Cytosolic-abundant heat soluble protein 86272 (237 aa).

A disordered region spans residues 96–125 (FKDQEKYSREQAAIARAHDKDLEKKTEEYR). The segment covering 111–125 (RAHDKDLEKKTEEYR) has biased composition (basic and acidic residues). Residues 115 to 193 (KDLEKKTEEY…MNALEQSKMA (79 aa)) are a coiled coil. CAHS motif stretches follow at residues 124–142 (YRKTAEAEAEKIRKELEKQ) and 161–179 (QKREVDLEAKYAKKELEHE). Low complexity predominate over residues 204-215 (AGTTVSGGTTVS). The disordered stretch occupies residues 204 to 237 (AGTTVSGGTTVSEHTEVHDGKEKKSLGEKIKSLF). Basic and acidic residues predominate over residues 216–237 (EHTEVHDGKEKKSLGEKIKSLF).

This sequence belongs to the Cytosolic-abundant heat soluble protein (CAHS) family.

It is found in the cytoplasm. CAHS proteins are cytosolic heat soluble proteins that seem to contribute to the anhydrobiosis in tardigrades, but their specific mechanisms are yet to be identified. It is possible that protection during anhydrobiosis might occur via the stabilization of vitrifying small molecules such as sugars, but not via the direct glass transition of CAHS proteins themselves. The sequence is that of Cytosolic-abundant heat soluble protein 86272 from Hypsibius exemplaris (Freshwater tardigrade).